The chain runs to 303 residues: MRARPLSAHLKALEAESMHIMREVAAEFDNPVMLYSIGKDSAVMLHLALKAFYPSRPPFPLQHVDSTFKFKEMITFRDAIAEELGLEIRVEINEDGRARGINPFDHGSQLHTQVMKTEALRSAMTRHKYDAAFGGARRDEEKSRAKERIFSFRDTNHGWDPKNQRPELWSNYNTKIKQGESIRVFPLSNWTELDIWQYILEEDIPIVPLYYAAHRPVVERDGQLIMVDDERLPMKDGEKPDLKLVRFRTLGCYPLTGAIESSAQTLEEIVLEMLTARTSERSGRLIDHDESGSMEKKKREGYF.

The disordered stretch occupies residues 282 to 303 (SGRLIDHDESGSMEKKKREGYF).

The protein belongs to the PAPS reductase family. CysD subfamily. In terms of assembly, heterodimer composed of CysD, the smaller subunit, and CysN.

It carries out the reaction sulfate + ATP + H(+) = adenosine 5'-phosphosulfate + diphosphate. Its pathway is sulfur metabolism; hydrogen sulfide biosynthesis; sulfite from sulfate: step 1/3. Functionally, with CysN forms the ATP sulfurylase (ATPS) that catalyzes the adenylation of sulfate producing adenosine 5'-phosphosulfate (APS) and diphosphate, the first enzymatic step in sulfur assimilation pathway. APS synthesis involves the formation of a high-energy phosphoric-sulfuric acid anhydride bond driven by GTP hydrolysis by CysN coupled to ATP hydrolysis by CysD. In Maricaulis maris (strain MCS10) (Caulobacter maris), this protein is Sulfate adenylyltransferase subunit 2.